Consider the following 536-residue polypeptide: Glucose-6-phosphate isomerase (536 aa).

Glutamate 345 acts as the Proton donor in catalysis. Catalysis depends on residues histidine 376 and lysine 505.

Belongs to the GPI family.

The protein localises to the cytoplasm. The enzyme catalyses alpha-D-glucose 6-phosphate = beta-D-fructose 6-phosphate. It functions in the pathway carbohydrate biosynthesis; gluconeogenesis. It participates in carbohydrate degradation; glycolysis; D-glyceraldehyde 3-phosphate and glycerone phosphate from D-glucose: step 2/4. In terms of biological role, catalyzes the reversible isomerization of glucose-6-phosphate to fructose-6-phosphate. This is Glucose-6-phosphate isomerase from Ruegeria sp. (strain TM1040) (Silicibacter sp.).